A 311-amino-acid polypeptide reads, in one-letter code: GTPase Era (311 aa).

An Era-type G domain is found at 18–185; that stretch reads RSGFVALIGA…AKYLAESVPN (168 aa). The segment at 26–33 is G1; that stretch reads GAPNAGKS. 26–33 lines the GTP pocket; sequence GAPNAGKS. A G2 region spans residues 52–56; it reads QTTRA. Residues 73 to 76 are G3; it reads DTPG. Residues 73–77 and 135–138 each bind GTP; these read DTPGI and NKVD. Residues 135–138 form a G4 region; the sequence is NKVD. A G5 region spans residues 164–166; that stretch reads ISA. Residues 216–293 form the KH type-2 domain; the sequence is LHEELPYAST…HQFLFVKVRE (78 aa).

It belongs to the TRAFAC class TrmE-Era-EngA-EngB-Septin-like GTPase superfamily. Era GTPase family. As to quaternary structure, monomer.

It localises to the cytoplasm. Its subcellular location is the cell inner membrane. Functionally, an essential GTPase that binds both GDP and GTP, with rapid nucleotide exchange. Plays a role in 16S rRNA processing and 30S ribosomal subunit biogenesis and possibly also in cell cycle regulation and energy metabolism. The polypeptide is GTPase Era (Brucella melitensis biotype 1 (strain ATCC 23456 / CCUG 17765 / NCTC 10094 / 16M)).